Here is a 165-residue protein sequence, read N- to C-terminus: Protein eva-1 homolog B (165 aa).

Residues 29–49 (GLYFVLGVCFGLLLTLCLLVI) form a helical membrane-spanning segment. 2 disordered regions span residues 57 to 109 (PRPR…GPLN) and 143 to 165 (LLGTGTLGPSPTATGTLGRMHYY). Over residues 74-84 (EPEDDDEDEED) the composition is skewed to acidic residues. A phosphothreonine mark is found at Thr-85, Thr-148, and Thr-158.

Belongs to the EVA1 family.

Its subcellular location is the membrane. This chain is Protein eva-1 homolog B (EVA1B), found in Homo sapiens (Human).